A 1120-amino-acid polypeptide reads, in one-letter code: MCIVKYLSLIINTMTEHYSQLTGEPDFPSIEENVLKFWQENNIFKKSVDNRDENKRFIFYDGPPFANGLPHYGHLLTGFIKDTVARYKTMAGFKVERRFGWDCHGLPAEMLSEKELGISGKLAIEKFGIEKFNNHCRNSVMKFSKEWKQYVDRQARWVDFENDYKTMNSSFMESIIWSFHELWNKGLIYESIKIVPYSWACQTPLSNFETRMDNAYREKTSKTVTVAFELLESPKFITVENVKTYKILVWTTTPWTLPCNLALAISKNIKYCGAIIKHEMLIFATGYLKIFQEHCKKNNIEYQLYNQDISSVNLEDLHYKPLFKYFADVKNAFKILTADFVVEGEGTGIVHIAPGFGEDDFILCKMQDIPHIEGDTSNLLSIICPIDDGAKFTDKISDFKNMHVFDTNDQIINILKQKNLCFKIDQYLHNYPHCWRTDTPLIYRAMSSWYVEVTKIKDKMIELNKTVNWIPNHICNGQFGKWLENAKDWAISRNRFWGTPLPVWKSDNPNYPRIDVYGSIRKVFNNVKALEEDFDISSINDLHRPYIDNLVRPNPDDPTGKSMMRRVSDVFDCWFESGSMPYAQLHYPFENKEFFENYFPADFITEYIAQTRGWFYTLFILSTALFNKPPFINCICHGVVLDTQGQKLSKRLNNYADPMEIFNQYGSDAMRFLMLSHTVLYGGDLLLDKEGVMIKDVLRNVIKPIWNSYNFFTIYANIDHITAEIITELNELSNIMDRYIICECINTIHSIFNAMEELDQCSNNLGYNIKLACNNITKFFEILNNWYIRRCRSRFWSSEITQDKQDAYNTLYTVIYYMIKVSAPFLPIITEAIWQRLNFQKEESVHLSSLPNISNFILNNEDKQNIQYMKLITCICNYVLSIRSTHNIRIRQPLNKIVIYSHNCPDLLNLPAEYQNILLEEVNVKSISFKSDISDIASFQLKLNFPELGKRIPDKVKRLIFLLKNDQWKILENDKLLLGTIEAEHYVINNNEYTLALKVHNDFACTINLDQHLLGVVLLDNELSNELIMEGIARDIIRTIQHSRKDNKFNISDKIDVIIHTKDNIVKDSIKTWSQYIIQQTLSTSFAIHEEISDIQDINEYYKTTMKDKEVSVFLKKSHT.

A 'HIGH' region motif is present at residues 64-74; the sequence is PFANGLPHYGH. The short motif at 647 to 651 is the 'KMSKS' region element; the sequence is KLSKR. Lys650 is an ATP binding site.

The protein belongs to the class-I aminoacyl-tRNA synthetase family. IleS type 2 subfamily. Monomer. It depends on Zn(2+) as a cofactor.

The protein localises to the cytoplasm. The catalysed reaction is tRNA(Ile) + L-isoleucine + ATP = L-isoleucyl-tRNA(Ile) + AMP + diphosphate. Functionally, catalyzes the attachment of isoleucine to tRNA(Ile). As IleRS can inadvertently accommodate and process structurally similar amino acids such as valine, to avoid such errors it has two additional distinct tRNA(Ile)-dependent editing activities. One activity is designated as 'pretransfer' editing and involves the hydrolysis of activated Val-AMP. The other activity is designated 'posttransfer' editing and involves deacylation of mischarged Val-tRNA(Ile). The protein is Isoleucine--tRNA ligase of Ehrlichia canis (strain Jake).